Here is a 289-residue protein sequence, read N- to C-terminus: Orotidine 5'-phosphate decarboxylase (289 aa).

Lys-97 functions as the Proton donor in the catalytic mechanism.

This sequence belongs to the OMP decarboxylase family. Type 2 subfamily.

It catalyses the reaction orotidine 5'-phosphate + H(+) = UMP + CO2. Its pathway is pyrimidine metabolism; UMP biosynthesis via de novo pathway; UMP from orotate: step 2/2. This chain is Orotidine 5'-phosphate decarboxylase, found in Petrotoga mobilis (strain DSM 10674 / SJ95).